Here is a 396-residue protein sequence, read N- to C-terminus: 1-deoxy-D-xylulose 5-phosphate reductoisomerase (396 aa).

Positions 10, 11, 12, 13, and 123 each coordinate NADPH. Residue K124 participates in 1-deoxy-D-xylulose 5-phosphate binding. Residue E125 participates in NADPH binding. D149 provides a ligand contact to Mn(2+). 4 residues coordinate 1-deoxy-D-xylulose 5-phosphate: S150, E151, S185, and H208. E151 lines the Mn(2+) pocket. NADPH is bound at residue G214. 4 residues coordinate 1-deoxy-D-xylulose 5-phosphate: S221, N226, K227, and E230. E230 is a Mn(2+) binding site.

The protein belongs to the DXR family. It depends on Mg(2+) as a cofactor. Mn(2+) serves as cofactor.

The catalysed reaction is 2-C-methyl-D-erythritol 4-phosphate + NADP(+) = 1-deoxy-D-xylulose 5-phosphate + NADPH + H(+). The protein operates within isoprenoid biosynthesis; isopentenyl diphosphate biosynthesis via DXP pathway; isopentenyl diphosphate from 1-deoxy-D-xylulose 5-phosphate: step 1/6. Catalyzes the NADPH-dependent rearrangement and reduction of 1-deoxy-D-xylulose-5-phosphate (DXP) to 2-C-methyl-D-erythritol 4-phosphate (MEP). This chain is 1-deoxy-D-xylulose 5-phosphate reductoisomerase, found in Shewanella sp. (strain MR-7).